Here is a 191-residue protein sequence, read N- to C-terminus: Adenylate kinase (191 aa).

11–16 (GAGKGT) serves as a coordination point for ATP. Positions 31-60 (STGDILRSNVAERSPLGIKAKDYMDKGDLV) are NMP. Residues Thr32, Arg37, 58–60 (DLV), 86–89 (GFPR), and Gln93 contribute to the AMP site. Positions 132 to 138 (SRKREDD) are LID. Arg133 is an ATP binding site. The AMP site is built by Arg135 and Arg146. Asn174 contributes to the ATP binding site.

Belongs to the adenylate kinase family. Monomer.

It localises to the cytoplasm. It carries out the reaction AMP + ATP = 2 ADP. It participates in purine metabolism; AMP biosynthesis via salvage pathway; AMP from ADP: step 1/1. Its function is as follows. Catalyzes the reversible transfer of the terminal phosphate group between ATP and AMP. Plays an important role in cellular energy homeostasis and in adenine nucleotide metabolism. The sequence is that of Adenylate kinase from Trichodesmium erythraeum (strain IMS101).